The primary structure comprises 427 residues: 4-hydroxy-3-methylbut-2-en-1-yl diphosphate synthase (flavodoxin) (427 aa).

The tract at residues 1–21 is disordered; that stretch reads MNKLENTIDSDIAGPAPRHRT. [4Fe-4S] cluster-binding residues include cysteine 310, cysteine 313, cysteine 356, and glutamate 363.

The protein belongs to the IspG family. The cofactor is [4Fe-4S] cluster.

It carries out the reaction (2E)-4-hydroxy-3-methylbut-2-enyl diphosphate + oxidized [flavodoxin] + H2O + 2 H(+) = 2-C-methyl-D-erythritol 2,4-cyclic diphosphate + reduced [flavodoxin]. Its pathway is isoprenoid biosynthesis; isopentenyl diphosphate biosynthesis via DXP pathway; isopentenyl diphosphate from 1-deoxy-D-xylulose 5-phosphate: step 5/6. Converts 2C-methyl-D-erythritol 2,4-cyclodiphosphate (ME-2,4cPP) into 1-hydroxy-2-methyl-2-(E)-butenyl 4-diphosphate. The polypeptide is 4-hydroxy-3-methylbut-2-en-1-yl diphosphate synthase (flavodoxin) (Bradyrhizobium diazoefficiens (strain JCM 10833 / BCRC 13528 / IAM 13628 / NBRC 14792 / USDA 110)).